Here is a 134-residue protein sequence, read N- to C-terminus: MIIGIGSDLIDIRRVEKSIERFGERFTHRCFTEIERARSDKRANRAASYAKRFAAKEACSKALGTGIAQGVFWKDMGVVNLRSGKPTMLLSGGAALILESLLPAGHRPAIHLTITDDYPLAQAFVIIEALPESL.

Positions 8 and 57 each coordinate Mg(2+).

The protein belongs to the P-Pant transferase superfamily. AcpS family. Mg(2+) serves as cofactor.

Its subcellular location is the cytoplasm. It catalyses the reaction apo-[ACP] + CoA = holo-[ACP] + adenosine 3',5'-bisphosphate + H(+). Transfers the 4'-phosphopantetheine moiety from coenzyme A to a Ser of acyl-carrier-protein. In Rhizobium johnstonii (strain DSM 114642 / LMG 32736 / 3841) (Rhizobium leguminosarum bv. viciae), this protein is Holo-[acyl-carrier-protein] synthase.